We begin with the raw amino-acid sequence, 206 residues long: dCTP deaminase, dUMP-forming (206 aa).

DCTP is bound by residues 117–122, Asp135, 143–145, Gln163, Tyr177, Lys184, and Gln188; these read RSSFGR and TLE. Residue Glu145 is the Proton donor/acceptor of the active site.

Belongs to the dCTP deaminase family. Homotrimer.

It carries out the reaction dCTP + 2 H2O = dUMP + NH4(+) + diphosphate. The protein operates within pyrimidine metabolism; dUMP biosynthesis; dUMP from dCTP: step 1/1. Functionally, bifunctional enzyme that catalyzes both the deamination of dCTP to dUTP and the hydrolysis of dUTP to dUMP without releasing the toxic dUTP intermediate. This chain is dCTP deaminase, dUMP-forming, found in Methanococcus maripaludis (strain C5 / ATCC BAA-1333).